A 530-amino-acid chain; its full sequence is Rho GTPase-activating protein 36 (530 aa).

Positions 1-19 (MPPLLLLSALIFLVNVLGG) are cleaved as a signal peptide. A Rho-GAP domain is found at 209 to 409 (MSLNPIAKQI…AMIDNWDVLF (201 aa)). Residues 471-512 (GQSKPFDEGSSEEPAVPPGTARSHDDEEGAGNPLILEQDRPL) form a disordered region.

In terms of assembly, may interacts (via the Rho-GAP domain) with the active form of RAC1.

GTPase activator for the Rho-type GTPases by converting them to an inactive GDP-bound state. This chain is Rho GTPase-activating protein 36 (ARHGAP36), found in Bos taurus (Bovine).